A 261-amino-acid chain; its full sequence is Class II histocompatibility antigen, M beta 1 chain (261 aa).

The first 18 residues, 1–18 (MAALWLLLLVLSLHCMGA), serve as a signal peptide directing secretion. Residues 19–112 (GGFVAHVEST…PFWNALTHRT (94 aa)) form a beta-1 region. At 19 to 218 (GGFVAHVEST…PGLSPIQTVK (200 aa)) the chain is on the lumenal side. Cystine bridges form between Cys29–Cys97, Cys43–Cys53, and Cys135–Cys192. The N-linked (GlcNAc...) asparagine glycan is linked to Asn75. The interval 113 to 207 (RPPSVRVAQT…GTSEPIRGDW (95 aa)) is beta-2. In terms of domain architecture, Ig-like C1-type spans 114–204 (PPSVRVAQTT…QHSGTSEPIR (91 aa)). Residues 208 to 218 (TPGLSPIQTVK) form a connecting peptide region. The chain crosses the membrane as a helical span at residues 219–239 (VSVSAATLGLGFIIFCVGFFR). The Cytoplasmic portion of the chain corresponds to 240–261 (WRKSHSSSYTPLSGSTYPEGRH). A YXXZ motif motif is present at residues 248-251 (YTPL).

The protein belongs to the MHC class II family. As to quaternary structure, heterodimer of an alpha chain (DMA) and a beta chain (DMB). Interacts with MHCII; this interaction mediates rapid selection of high-affinity peptides.

Its subcellular location is the late endosome membrane. It localises to the lysosome membrane. Its function is as follows. Plays a critical role in catalyzing the release of class II-associated invariant chain peptide (CLIP) from newly synthesized MHC class II molecules and freeing the peptide binding site for acquisition of antigenic peptides. The chain is Class II histocompatibility antigen, M beta 1 chain (H2-DMb1) from Mus musculus (Mouse).